Reading from the N-terminus, the 200-residue chain is Proteasome subunit beta 2 (200 aa).

Residue methionine 1 is a propeptide, removed in mature form; by autocatalysis. The active-site Nucleophile is the threonine 2.

This sequence belongs to the peptidase T1B family. The 20S proteasome core is composed of 14 alpha and 14 beta subunits that assemble into four stacked heptameric rings, resulting in a barrel-shaped structure. The two inner rings, each composed of seven catalytic beta subunits, are sandwiched by two outer rings, each composed of seven alpha subunits. The catalytic chamber with the active sites is on the inside of the barrel. Has a gated structure, the ends of the cylinder being occluded by the N-termini of the alpha-subunits. Is capped at one or both ends by the proteasome regulatory ATPase, PAN.

Its subcellular location is the cytoplasm. The enzyme catalyses Cleavage of peptide bonds with very broad specificity.. With respect to regulation, the formation of the proteasomal ATPase PAN-20S proteasome complex, via the docking of the C-termini of PAN into the intersubunit pockets in the alpha-rings, triggers opening of the gate for substrate entry. Interconversion between the open-gate and close-gate conformations leads to a dynamic regulation of the 20S proteasome proteolysis activity. In terms of biological role, component of the proteasome core, a large protease complex with broad specificity involved in protein degradation. This is Proteasome subunit beta 2 from Pyrobaculum islandicum (strain DSM 4184 / JCM 9189 / GEO3).